A 411-amino-acid chain; its full sequence is Metacaspase-1B (411 aa).

Residues 1–97 (MYHRHSAPPP…PPLEAQQFGN (97 aa)) are disordered. Residues 7–65 (APPPPGRSRGYPPPQQQWPPQPYQYLPYPPQGPPPAHTFPPPAHRSYPSPYPTPPPHSP) are compositionally biased toward pro residues. Catalysis depends on residues H198 and C254.

The protein belongs to the peptidase C14B family.

In terms of biological role, involved in cell death (apoptosis). This Neosartorya fischeri (strain ATCC 1020 / DSM 3700 / CBS 544.65 / FGSC A1164 / JCM 1740 / NRRL 181 / WB 181) (Aspergillus fischerianus) protein is Metacaspase-1B (casB).